We begin with the raw amino-acid sequence, 159 residues long: Kojic acid related protein 6 (159 aa).

In terms of biological role, negatively regulates mycelium growth and conidial formation and is required for stress tolerance. Plays a role in kojic acid synthesis in coordination with kojA, kojR and kojT where it acts upstream of kojA. In Aspergillus oryzae (strain ATCC 42149 / RIB 40) (Yellow koji mold), this protein is Kojic acid related protein 6.